Here is an 89-residue protein sequence, read N- to C-terminus: Small ribosomal subunit protein uS15 (89 aa).

It belongs to the universal ribosomal protein uS15 family. As to quaternary structure, part of the 30S ribosomal subunit. Forms a bridge to the 50S subunit in the 70S ribosome, contacting the 23S rRNA.

Functionally, one of the primary rRNA binding proteins, it binds directly to 16S rRNA where it helps nucleate assembly of the platform of the 30S subunit by binding and bridging several RNA helices of the 16S rRNA. Its function is as follows. Forms an intersubunit bridge (bridge B4) with the 23S rRNA of the 50S subunit in the ribosome. The chain is Small ribosomal subunit protein uS15 from Paenarthrobacter aurescens (strain TC1).